Reading from the N-terminus, the 208-residue chain is ATP phosphoribosyltransferase (208 aa).

The protein belongs to the ATP phosphoribosyltransferase family. Short subfamily. Heteromultimer composed of HisG and HisZ subunits.

The protein resides in the cytoplasm. It catalyses the reaction 1-(5-phospho-beta-D-ribosyl)-ATP + diphosphate = 5-phospho-alpha-D-ribose 1-diphosphate + ATP. It functions in the pathway amino-acid biosynthesis; L-histidine biosynthesis; L-histidine from 5-phospho-alpha-D-ribose 1-diphosphate: step 1/9. Catalyzes the condensation of ATP and 5-phosphoribose 1-diphosphate to form N'-(5'-phosphoribosyl)-ATP (PR-ATP). Has a crucial role in the pathway because the rate of histidine biosynthesis seems to be controlled primarily by regulation of HisG enzymatic activity. This Clostridioides difficile (strain 630) (Peptoclostridium difficile) protein is ATP phosphoribosyltransferase.